The following is a 438-amino-acid chain: MAMSLIQACCSLALSTWLLSFCFVHLLCLDFTVAEKEEWYTAFVNITYAEPAPDPGAGAAGGGGAELHTEKTECGRYGEHSPKQDARGEVVMASSAHDRLACDPNTKFAAPTRGKNWIALIPKGNCTYRDKIRNAFLQNASAVVIFNVGSNTNETITMPHAGVEDIVAIMIPEPKGKEIVSLLERNITVTMYITIGTRNLQKYVSRTSVVFVSISFIVLMIISLAWLVFYYIQRFRYANARDRNQRRLGDAAKKAISKLQIRTIKKGDKETESDFDNCAVCIEGYKPNDVVRILPCRHLFHKSCVDPWLLDHRTCPMCKMNILKALGIPPNADCMDDLPTDFEGSLGGPPTNQITGASDTTVNESSVTLDPAVRTVGALQVVQDTDPIPQEGDVIFTTNSEQEPAVSSDSDISLIMAMEVGLSDVELSTDQDCEEVKS.

The signal sequence occupies residues 1-34 (MAMSLIQACCSLALSTWLLSFCFVHLLCLDFTVA). At 35-208 (EKEEWYTAFV…NLQKYVSRTS (174 aa)) the chain is on the extracellular side. N-linked (GlcNAc...) asparagine glycans are attached at residues N45, N125, N153, and N186. The PA domain occupies 81-183 (SPKQDARGEV…PKGKEIVSLL (103 aa)). A helical membrane pass occupies residues 209 to 229 (VVFVSISFIVLMIISLAWLVF). The Cytoplasmic segment spans residues 230–438 (YYIQRFRYAN…TDQDCEEVKS (209 aa)). The RING-type; atypical zinc finger occupies 278 to 319 (CAVCIEGYKPNDVVRILPCRHLFHKSCVDPWLLDHRTCPMCK).

The protein localises to the membrane. The polypeptide is RING finger protein 150 (RNF150) (Homo sapiens (Human)).